The following is a 457-amino-acid chain: Acetylcholine receptor subunit alpha-1-A (457 aa).

The signal sequence occupies residues 1–20 (MDFVLTRLILLFLAATIIYS). Topologically, residues 21–230 (SEDESRLIND…ITYHFLLQRL (210 aa)) are extracellular. 2 cysteine pairs are disulfide-bonded: Cys-148/Cys-162 and Cys-212/Cys-213. Asn-161 carries N-linked (GlcNAc...) asparagine glycosylation. 3 consecutive transmembrane segments (helical) span residues 231–255 (PLYF…VFYL), 263–281 (ITLS…LVIV), and 297–316 (YMLF…VIVI). Topologically, residues 317 to 428 (NTHHRSPSTH…WKFVAMVLDH (112 aa)) are cytoplasmic. A helical membrane pass occupies residues 429 to 447 (LLLAVFMIVCIIGTLAIFA).

The protein belongs to the ligand-gated ion channel (TC 1.A.9) family. Acetylcholine receptor (TC 1.A.9.1) subfamily. Alpha-1/CHRNA1 sub-subfamily. As to quaternary structure, one of the alpha chains that assemble within the acetylcholine receptor, a pentamer of two alpha chains, a beta, a delta, and a gamma or epsilon chains. In terms of tissue distribution, oocytes.

The protein resides in the postsynaptic cell membrane. It localises to the cell membrane. It catalyses the reaction K(+)(in) = K(+)(out). The enzyme catalyses Na(+)(in) = Na(+)(out). Its function is as follows. Upon acetylcholine binding, the AChR responds by an extensive change in conformation that affects all subunits and leads to opening of an ion-conducting channel across the plasma membrane. This Xenopus laevis (African clawed frog) protein is Acetylcholine receptor subunit alpha-1-A (chrna1-a).